The sequence spans 350 residues: Spermidine/putrescine import ATP-binding protein PotA (350 aa).

An ABC transporter domain is found at 6–236 (LELRNISKQY…PENLWTAQFI (231 aa)). An ATP-binding site is contributed by 38–45 (GPSGCGKT).

Belongs to the ABC transporter superfamily. Spermidine/putrescine importer (TC 3.A.1.11.1) family. As to quaternary structure, the complex is composed of two ATP-binding proteins (PotA), two transmembrane proteins (PotB and PotC) and a solute-binding protein (PotD).

Its subcellular location is the cell membrane. It catalyses the reaction ATP + H2O + polyamine-[polyamine-binding protein]Side 1 = ADP + phosphate + polyamineSide 2 + [polyamine-binding protein]Side 1.. Its function is as follows. Part of the ABC transporter complex PotABCD involved in spermidine/putrescine import. Responsible for energy coupling to the transport system. The protein is Spermidine/putrescine import ATP-binding protein PotA of Spiroplasma citri.